Here is a 249-residue protein sequence, read N- to C-terminus: MDGKKCSVWMFLPLVFTVFTSAGLWIVYFIAVEDDKIFPLNSAERKPGVKHAPYISIAGDEPPASCVFSQVMNMAAFLALVVAVLRFIQLKPKVLNPWLNISGLVALCLASFGMTLLGNFQLTNDEEIHNVGTSLTFGFGTLTCWIQAALTLKVNIKNEGRKVGIPRVILSASITLCVVLYFILMAQGIHMYAARVQWGLVMCFLSYFGTFAVEFRHYRYEIVCSEYQENFLSFSESLSEASEYQTDQV.

Over 1–9 (MDGKKCSVW) the chain is Cytoplasmic. Residues 10 to 30 (MFLPLVFTVFTSAGLWIVYFI) traverse the membrane as a helical segment. The Extracellular segment spans residues 31–64 (AVEDDKIFPLNSAERKPGVKHAPYISIAGDEPPA). Residues 65-85 (SCVFSQVMNMAAFLALVVAVL) traverse the membrane as a helical segment. Over 86 to 97 (RFIQLKPKVLNP) the chain is Cytoplasmic. The chain crosses the membrane as a helical span at residues 98–118 (WLNISGLVALCLASFGMTLLG). Residues 119–130 (NFQLTNDEEIHN) lie on the Extracellular side of the membrane. The chain crosses the membrane as a helical span at residues 131–151 (VGTSLTFGFGTLTCWIQAALT). The Cytoplasmic segment spans residues 152 to 168 (LKVNIKNEGRKVGIPRV). Residues 169–189 (ILSASITLCVVLYFILMAQGI) traverse the membrane as a helical segment. Over 190–192 (HMY) the chain is Extracellular. Residues 193 to 213 (AARVQWGLVMCFLSYFGTFAV) form a helical membrane-spanning segment. Residues 214–249 (EFRHYRYEIVCSEYQENFLSFSESLSEASEYQTDQV) are Cytoplasmic-facing.

The protein belongs to the DRAM/TMEM150 family.

The protein resides in the cell membrane. Its subcellular location is the lysosome membrane. The catalysed reaction is Ca(2+)(in) = Ca(2+)(out). The enzyme catalyses Na(+)(in) = Na(+)(out). It catalyses the reaction K(+)(in) = K(+)(out). It carries out the reaction Mg(2+)(in) = Mg(2+)(out). Functionally, nonselective cationic channel with high permeability to Ca(2+). Component of a mechanosensitive cation channel. Confers mechanically activated (MA) currents with slow inactivation kinetics. May contribute to proprioception. The sequence is that of Transmembrane protein 150C (TMEM150C) from Bos taurus (Bovine).